A 689-amino-acid chain; its full sequence is Glycine--tRNA ligase beta subunit (689 aa).

Belongs to the class-II aminoacyl-tRNA synthetase family. As to quaternary structure, tetramer of two alpha and two beta subunits.

Its subcellular location is the cytoplasm. It catalyses the reaction tRNA(Gly) + glycine + ATP = glycyl-tRNA(Gly) + AMP + diphosphate. In Klebsiella pneumoniae (strain 342), this protein is Glycine--tRNA ligase beta subunit.